The primary structure comprises 401 residues: Propionate kinase (401 aa).

Positions 11 and 18 each coordinate ATP. Asn11 serves as a coordination point for Mg(2+). Substrate is bound at residue Arg86. The active-site Proton donor/acceptor is the Asp143. Residues His175, 203–207 (HLGNG), 278–280 (DLR), and 326–330 (GIGEN) contribute to the ATP site.

This sequence belongs to the acetokinase family. TdcD subfamily. In terms of assembly, homodimer. Mg(2+) serves as cofactor.

It carries out the reaction propanoate + ATP = propanoyl phosphate + ADP. It participates in amino-acid degradation; L-threonine degradation via propanoate pathway; propanoate from L-threonine: step 4/4. In terms of biological role, catalyzes the conversion of propionyl phosphate and ADP to propionate and ATP. The polypeptide is Propionate kinase (Klebsiella pneumoniae (strain 342)).